Reading from the N-terminus, the 115-residue chain is Probable prefoldin subunit 1 (115 aa).

Belongs to the prefoldin subunit beta family. Heterohexamer of two PFD-alpha type and four PFD-beta type subunits.

In terms of biological role, binds specifically to cytosolic chaperonin (c-CPN) and transfers target proteins to it. Binds to nascent polypeptide chain and promotes folding in an environment in which there are many competing pathways for nonnative proteins. This chain is Probable prefoldin subunit 1 (pfdn1), found in Dictyostelium discoideum (Social amoeba).